Consider the following 292-residue polypeptide: Probable porphobilinogen deaminase (292 aa).

An S-(dipyrrolylmethanemethyl)cysteine modification is found at Cys233.

This sequence belongs to the HMBS family. Dipyrromethane serves as cofactor.

The enzyme catalyses 4 porphobilinogen + H2O = hydroxymethylbilane + 4 NH4(+). It functions in the pathway porphyrin-containing compound metabolism; protoporphyrin-IX biosynthesis; coproporphyrinogen-III from 5-aminolevulinate: step 2/4. Its function is as follows. Tetrapolymerization of the monopyrrole PBG into the hydroxymethylbilane pre-uroporphyrinogen in several discrete steps. The protein is Probable porphobilinogen deaminase (hemC) of Methanocaldococcus jannaschii (strain ATCC 43067 / DSM 2661 / JAL-1 / JCM 10045 / NBRC 100440) (Methanococcus jannaschii).